The primary structure comprises 165 residues: Pro-MCH (165 aa).

The N-terminal stretch at 1 to 21 (MAKMTLSSYMLMLAFSLFSQG) is a signal peptide. The segment at 66 to 89 (YKNDESGFMNDDDNKNSKNTGSKQ) is disordered. Ile143 is subject to Isoleucine amide. Cys153 and Cys162 are oxidised to a cystine.

It belongs to the MCH family. In terms of processing, pro-MCH is processed differentially in the brain and in peripheral organs producing two neuropeptides; NEI and MCH. A third peptide, NGE, may also be produced. Preferential processing in neurons by prohormone convertase 2 (PC2) generates NEI. MCH is generated in neurons of the lateral hypothalmic area by several prohormone convertases including PC1/3, PC2 and PC5/6. As to expression, predominantly expressed in hypothalamus. Also found in heart, intestine, spleen and testis (spermatogonia, early spermatocytes and Sertoli cells). In brain only mature MCH and NEI peptides are present. In peripheral tissues a large product, encompassing the NEI and MCH domains of the precursor, is found predominantly.

Its subcellular location is the secreted. Its function is as follows. MCH may act as a neurotransmitter or neuromodulator in a broad array of neuronal functions directed toward the regulation of goal-directed behavior, such as food intake, and general arousal. The sequence is that of Pro-MCH (Pmch) from Mus musculus (Mouse).